The sequence spans 149 residues: Gamma-glutamylaminecyclotransferase (149 aa).

7–10 contributes to the substrate binding site; sequence YGTL. The Proton acceptor role is filled by Glu82.

Belongs to the gamma-glutamylcyclotransferase family. As to quaternary structure, monomer.

The catalysed reaction is epsilon-(gamma-L-glutamyl)-L-lysine = 5-oxo-L-proline + L-lysine. Contributes to degradation of proteins cross-linked by transglutaminases by degrading the cross-link between a lysine and a glutamic acid residue. Catalyzes the formation of 5-oxo-L-proline from L-gamma-glutamyl-L-epsilon-lysine. Inactive with L-gamma-glutamyl-alpha-amino acid substrates such as L-gamma-glutamyl-L-alpha-cysteine and L-gamma-glutamyl-L-alpha-alanine. The chain is Gamma-glutamylaminecyclotransferase (Ggact) from Mus musculus (Mouse).